Reading from the N-terminus, the 156-residue chain is CRIB domain-containing protein RIC10 (156 aa).

Positions 30–43 (IGFPTDVKHVAHIG) constitute a CRIB domain. The span at 68–77 (RPSSFSNARP) shows a compositional bias: polar residues. The interval 68 to 156 (RPSSFSNARP…SYKSTVSRLI (89 aa)) is disordered. The span at 78–96 (STSFFTSSSSTDFDQGSSQ) shows a compositional bias: low complexity. A compositionally biased stretch (basic residues) spans 117 to 128 (NNKKKSSRRKKS). The segment covering 129–156 (SSSSSSPKSSRSSVLSKSSYKSTVSRLI) has biased composition (low complexity).

Expressed in roots, leaves, flowers and pollen.

It localises to the cytoplasm. Its function is as follows. Functions as a downstream effector of Rho-related GTP binding proteins of the 'Rho of Plants' (ROPs) family. Participates in the propagation of ROP GTPase signals in specific cellular responses. Is involved in pollen tube growth regulation. This chain is CRIB domain-containing protein RIC10 (RIC10), found in Arabidopsis thaliana (Mouse-ear cress).